The sequence spans 504 residues: Hydroxyisobutyraldehyde dehydrogenase (504 aa).

Glu-260 serves as the catalytic Proton acceptor. The active-site Nucleophile is the Cys-294.

This sequence belongs to the aldehyde dehydrogenase family.

It localises to the cytoplasm. The catalysed reaction is 2-hydroxy-2-methylpropanal + NAD(+) + H2O = 2-hydroxy-2-methylpropanoate + NADH + 2 H(+). Functionally, involved in the degradation of methyl tert-butyl ether (MTBE). Catalyzes the conversion of hydroxyisobutyraldehyde to hydroxyisobutyric acid (HIBA). This Mycolicibacterium austroafricanum (Mycobacterium austroafricanum) protein is Hydroxyisobutyraldehyde dehydrogenase.